A 252-amino-acid chain; its full sequence is ATP synthase subunit a (252 aa).

The next 6 helical transmembrane spans lie at 29 to 49 (FTNVSLFTVVTVVITAAFLFI), 87 to 107 (FFPLVFSLFTFILVANFIGLF), 117 to 137 (IMITFSLAMVVILTVIGYGFY), 146 to 166 (LFVPSGVPVVVLPLVTMIEII), 196 to 216 (FIVSMIGVGIVGVGGAVLPLI), and 219 to 239 (VAITALEFLVAFLQAYVFTVL).

It belongs to the ATPase A chain family. In terms of assembly, F-type ATPases have 2 components, CF(1) - the catalytic core - and CF(0) - the membrane proton channel. CF(1) has five subunits: alpha(3), beta(3), gamma(1), delta(1), epsilon(1). CF(0) has three main subunits: a(1), b(2) and c(9-12). The alpha and beta chains form an alternating ring which encloses part of the gamma chain. CF(1) is attached to CF(0) by a central stalk formed by the gamma and epsilon chains, while a peripheral stalk is formed by the delta and b chains.

It is found in the cell inner membrane. Key component of the proton channel; it plays a direct role in the translocation of protons across the membrane. The chain is ATP synthase subunit a from Bartonella tribocorum (strain CIP 105476 / IBS 506).